Reading from the N-terminus, the 202-residue chain is Proteasome subunit beta 1 (202 aa).

Positions 1 to 8 (MGEVVLPG) are cleaved as a propeptide — removed in mature form; by autocatalysis. The active-site Nucleophile is the Thr9.

Belongs to the peptidase T1B family. In terms of assembly, the 20S proteasome core is composed of 14 alpha and 14 beta subunits that assemble into four stacked heptameric rings, resulting in a barrel-shaped structure. The two inner rings, each composed of seven catalytic beta subunits, are sandwiched by two outer rings, each composed of seven alpha subunits. The catalytic chamber with the active sites is on the inside of the barrel. Has a gated structure, the ends of the cylinder being occluded by the N-termini of the alpha-subunits. Is capped at one or both ends by the proteasome regulatory ATPase, PAN.

The protein localises to the cytoplasm. It carries out the reaction Cleavage of peptide bonds with very broad specificity.. The formation of the proteasomal ATPase PAN-20S proteasome complex, via the docking of the C-termini of PAN into the intersubunit pockets in the alpha-rings, triggers opening of the gate for substrate entry. Interconversion between the open-gate and close-gate conformations leads to a dynamic regulation of the 20S proteasome proteolysis activity. Its function is as follows. Component of the proteasome core, a large protease complex with broad specificity involved in protein degradation. The chain is Proteasome subunit beta 1 from Desulfurococcus amylolyticus (strain DSM 18924 / JCM 16383 / VKM B-2413 / 1221n) (Desulfurococcus kamchatkensis).